The sequence spans 197 residues: Phosphoheptose isomerase (197 aa).

One can recognise an SIS domain in the interval 36–197; the sequence is MVNALLNEGK…IDSQLFGSEE (162 aa). 51 to 53 lines the substrate pocket; it reads NGG. Zn(2+) contacts are provided by His60 and Glu64. Substrate is bound by residues Glu64, 93 to 94, 119 to 121, Ser124, and Gln174; these read ND and STS. Zn(2+) is bound by residues Gln174 and His182.

This sequence belongs to the SIS family. GmhA subfamily. In terms of assembly, homotetramer. Zn(2+) serves as cofactor.

It is found in the cytoplasm. It carries out the reaction 2 D-sedoheptulose 7-phosphate = D-glycero-alpha-D-manno-heptose 7-phosphate + D-glycero-beta-D-manno-heptose 7-phosphate. Its pathway is carbohydrate biosynthesis; D-glycero-D-manno-heptose 7-phosphate biosynthesis; D-glycero-alpha-D-manno-heptose 7-phosphate and D-glycero-beta-D-manno-heptose 7-phosphate from sedoheptulose 7-phosphate: step 1/1. Functionally, catalyzes the isomerization of sedoheptulose 7-phosphate in D-glycero-D-manno-heptose 7-phosphate. The sequence is that of Phosphoheptose isomerase from Pseudomonas syringae pv. syringae (strain B728a).